A 384-amino-acid chain; its full sequence is GTPase Obg (384 aa).

Positions 1 to 159 (MKFIDEAKIE…RSLQLELKVL (159 aa)) constitute an Obg domain. The tract at residues 20–46 (ATSFRREKFVPRGGPDGGDGGKGGSVW) is disordered. Over residues 33–43 (GPDGGDGGKGG) the composition is skewed to gly residues. An OBG-type G domain is found at 160–348 (ADVGLLGMPN…LVHQINQYLT (189 aa)). Residues 166-173 (GMPNAGKS), 191-195 (FTTLH), 213-216 (DIPG), 284-287 (NKLD), and 329-331 (SAL) each bind GTP. S173 and T193 together coordinate Mg(2+).

This sequence belongs to the TRAFAC class OBG-HflX-like GTPase superfamily. OBG GTPase family. In terms of assembly, monomer. Mg(2+) is required as a cofactor.

It localises to the cytoplasm. Functionally, an essential GTPase which binds GTP, GDP and possibly (p)ppGpp with moderate affinity, with high nucleotide exchange rates and a fairly low GTP hydrolysis rate. Plays a role in control of the cell cycle, stress response, ribosome biogenesis and in those bacteria that undergo differentiation, in morphogenesis control. The sequence is that of GTPase Obg from Neisseria meningitidis serogroup B (strain ATCC BAA-335 / MC58).